The chain runs to 219 residues: Histidinol-phosphate aminotransferase (219 aa).

Belongs to the class-II pyridoxal-phosphate-dependent aminotransferase family. Histidinol-phosphate aminotransferase subfamily. In terms of assembly, homodimer. Requires pyridoxal 5'-phosphate as cofactor.

The catalysed reaction is L-histidinol phosphate + 2-oxoglutarate = 3-(imidazol-4-yl)-2-oxopropyl phosphate + L-glutamate. Its pathway is amino-acid biosynthesis; L-histidine biosynthesis; L-histidine from 5-phospho-alpha-D-ribose 1-diphosphate: step 7/9. The sequence is that of Histidinol-phosphate aminotransferase (hisC) from Mycolicibacterium smegmatis (Mycobacterium smegmatis).